Consider the following 142-residue polypeptide: Cytochrome b5-related protein (142 aa).

The 85-residue stretch at 16 to 100 folds into the Cytochrome b5 heme-binding domain; sequence PTYRNSAPVT…IAKYKVRDAY (85 aa). The heme site is built by histidine 59 and histidine 82.

Belongs to the cytochrome b5 family.

Its function is as follows. May play a role in muscle cell metabolism. This is Cytochrome b5-related protein (Cyt-b5-r) from Drosophila virilis (Fruit fly).